Consider the following 610-residue polypeptide: Protein Spindly-B (610 aa).

A coiled-coil region spans residues 1 to 392 (MEESETVLKL…IDKVKDELSL (392 aa)). The interval 474-610 (TEAHGVSDAT…KPATAQCPQQ (137 aa)) is disordered. Composition is skewed to basic and acidic residues over residues 493 to 511 (SDDKKLPKEDLSLSTKDQD) and 535 to 548 (RIMEDEKDTPDLNK). Residues 549–561 (RNPNNCTITSIHP) are compositionally biased toward polar residues. The segment covering 570–583 (SELKKVDEEQEKRK) has biased composition (basic and acidic residues).

This sequence belongs to the Spindly family.

It localises to the chromosome. Its subcellular location is the centromere. The protein resides in the kinetochore. Required for the localization of dynein and dynactin to the mitotic kintochore. Dynein is believed to control the initial lateral interaction between the kinetochore and spindle microtubules and to facilitate the subsequent formation of end-on kinetochore-microtubule attachments mediated by the NDC80 complex. In Xenopus laevis (African clawed frog), this protein is Protein Spindly-B (spdl1-b).